The following is a 282-amino-acid chain: uncharacterized protein (282 aa).

This is an uncharacterized protein from Rickettsia conorii (strain ATCC VR-613 / Malish 7).